Consider the following 162-residue polypeptide: Large ribosomal subunit protein bL17 (162 aa).

Residues 125 to 140 (AAKEAPAKEVAEEKAA) are compositionally biased toward basic and acidic residues. A disordered region spans residues 125–162 (AAKEAPAKEVAEEKAAKPAKKAAPKKAEKEEAEDAAEA).

The protein belongs to the bacterial ribosomal protein bL17 family. In terms of assembly, part of the 50S ribosomal subunit. Contacts protein L32.

The chain is Large ribosomal subunit protein bL17 from Oleidesulfovibrio alaskensis (strain ATCC BAA-1058 / DSM 17464 / G20) (Desulfovibrio alaskensis).